Consider the following 343-residue polypeptide: Heat-inducible transcription repressor HrcA (343 aa).

This sequence belongs to the HrcA family.

Its function is as follows. Negative regulator of class I heat shock genes (grpE-dnaK-dnaJ and groELS operons). Prevents heat-shock induction of these operons. In Mycolicibacterium smegmatis (strain ATCC 700084 / mc(2)155) (Mycobacterium smegmatis), this protein is Heat-inducible transcription repressor HrcA.